Here is a 413-residue protein sequence, read N- to C-terminus: Calmodulin-binding protein CmbB (413 aa).

6 FNIP repeats span residues 104 to 148 (FNHP…LSDC), 149 to 192 (YNQA…LGKG), 222 to 257 (SLPP…FGDG), 258 to 301 (FNQP…FHQF), 304 to 343 (FSQT…FSEK), and 344 to 386 (YNHP…LNGY).

As to quaternary structure, interacts with calmodulin in the presence of Ca(2+).

The chain is Calmodulin-binding protein CmbB from Dictyostelium discoideum (Social amoeba).